The sequence spans 252 residues: tRNA (guanine-N(1)-)-methyltransferase (252 aa).

Residues Gly113 and 133–138 (VGDFVL) contribute to the S-adenosyl-L-methionine site.

The protein belongs to the RNA methyltransferase TrmD family. As to quaternary structure, homodimer.

It localises to the cytoplasm. It catalyses the reaction guanosine(37) in tRNA + S-adenosyl-L-methionine = N(1)-methylguanosine(37) in tRNA + S-adenosyl-L-homocysteine + H(+). Specifically methylates guanosine-37 in various tRNAs. This chain is tRNA (guanine-N(1)-)-methyltransferase, found in Francisella tularensis subsp. holarctica (strain FTNF002-00 / FTA).